The primary structure comprises 659 residues: Oligopeptide-binding protein AmiA (659 aa).

An N-terminal signal peptide occupies residues 1–22 (MKKNRVFATAGLVLLAAGVLAA). Cys-23 carries the N-palmitoyl cysteine lipid modification. Cys-23 carries the S-diacylglycerol cysteine lipid modification.

It belongs to the bacterial solute-binding protein 5 family.

Its subcellular location is the cell membrane. In terms of biological role, part of the binding-protein-dependent transport system for oligopeptides; probably an oligopeptide binding protein. The polypeptide is Oligopeptide-binding protein AmiA (amiA) (Streptococcus pneumoniae serotype 4 (strain ATCC BAA-334 / TIGR4)).